We begin with the raw amino-acid sequence, 105 residues long: Large ribosomal subunit protein uL23 (105 aa).

This sequence belongs to the universal ribosomal protein uL23 family. In terms of assembly, part of the 50S ribosomal subunit. Contacts protein L29, and trigger factor when it is bound to the ribosome.

Its function is as follows. One of the early assembly proteins it binds 23S rRNA. One of the proteins that surrounds the polypeptide exit tunnel on the outside of the ribosome. Forms the main docking site for trigger factor binding to the ribosome. In Janthinobacterium sp. (strain Marseille) (Minibacterium massiliensis), this protein is Large ribosomal subunit protein uL23.